Reading from the N-terminus, the 256-residue chain is ATP synthase peripheral stalk subunit b, mitochondrial (256 aa).

A mitochondrion-targeting transit peptide spans 1-42; sequence MLSRVVLSAAATAAPSLKNAAFLGPGVLQATRTFHTGQPHLV. Lys-131 is subject to N6-succinyllysine. An N6-acetyllysine mark is found at Lys-139, Lys-154, Lys-162, Lys-221, Lys-233, and Lys-244.

This sequence belongs to the eukaryotic ATPase B chain family. As to quaternary structure, component of the ATP synthase complex composed at least of ATP5F1A/subunit alpha, ATP5F1B/subunit beta, ATP5MC1/subunit c (homooctomer), MT-ATP6/subunit a, MT-ATP8/subunit 8, ATP5ME/subunit e, ATP5MF/subunit f, ATP5MG/subunit g, ATP5MK/subunit k, ATP5MJ/subunit j, ATP5F1C/subunit gamma, ATP5F1D/subunit delta, ATP5F1E/subunit epsilon, ATP5PF/subunit F6, ATP5PB/subunit b, ATP5PD/subunit d, ATP5PO/subunit OSCP. ATP synthase complex consists of a soluble F(1) head domain (subunits alpha(3) and beta(3)) - the catalytic core - and a membrane F(0) domain - the membrane proton channel (subunits c, a, 8, e, f, g, k and j). These two domains are linked by a central stalk (subunits gamma, delta, and epsilon) rotating inside the F1 region and a stationary peripheral stalk (subunits F6, b, d, and OSCP).

The protein localises to the mitochondrion. It localises to the mitochondrion inner membrane. In terms of biological role, subunit b, of the mitochondrial membrane ATP synthase complex (F(1)F(0) ATP synthase or Complex V) that produces ATP from ADP in the presence of a proton gradient across the membrane which is generated by electron transport complexes of the respiratory chain. ATP synthase complex consist of a soluble F(1) head domain - the catalytic core - and a membrane F(1) domain - the membrane proton channel. These two domains are linked by a central stalk rotating inside the F(1) region and a stationary peripheral stalk. During catalysis, ATP synthesis in the catalytic domain of F(1) is coupled via a rotary mechanism of the central stalk subunits to proton translocation. In vivo, can only synthesize ATP although its ATP hydrolase activity can be activated artificially in vitro. Part of the complex F(0) domain. Part of the complex F(0) domain and the peripheric stalk, which acts as a stator to hold the catalytic alpha(3)beta(3) subcomplex and subunit a/ATP6 static relative to the rotary elements. The chain is ATP synthase peripheral stalk subunit b, mitochondrial from Homo sapiens (Human).